Reading from the N-terminus, the 583-residue chain is Bifunctional dihydrofolate reductase-thymidylate synthase (583 aa).

The DHFR domain maps to 9–229 (DIYAICACCK…TTLDFVIYSK (221 aa)). Residue 36-42 (GLGNEGG) participates in NADP(+) binding. Aspartate 51 is a binding site for substrate. NADP(+) is bound by residues 104 to 106 (KAS) and 125 to 128 (LSRT). Substrate-binding residues include isoleucine 165, tyrosine 171, and threonine 186. 166–173 (GGASVYKE) lines the NADP(+) pocket. Positions 298–583 (HPEYQYLNII…HDKISMDMAA (286 aa)) are thymidylate synthase. DUMP is bound at residue arginine 320. Residue cysteine 465 is part of the active site. Residues histidine 466, 484–488 (QRSCD), asparagine 496, and 526–528 (HVY) each bind dUMP.

It in the N-terminal section; belongs to the dihydrofolate reductase family. The protein in the C-terminal section; belongs to the thymidylate synthase family. In terms of assembly, homodimer.

The enzyme catalyses (6S)-5,6,7,8-tetrahydrofolate + NADP(+) = 7,8-dihydrofolate + NADPH + H(+). The catalysed reaction is dUMP + (6R)-5,10-methylene-5,6,7,8-tetrahydrofolate = 7,8-dihydrofolate + dTMP. It participates in cofactor biosynthesis; tetrahydrofolate biosynthesis; 5,6,7,8-tetrahydrofolate from 7,8-dihydrofolate: step 1/1. Functionally, bifunctional enzyme. Involved in de novo dTMP biosynthesis. Key enzyme in folate metabolism. Catalyzes an essential reaction for de novo glycine and purine synthesis, DNA precursor synthesis, and for the conversion of dUMP to dTMP. The chain is Bifunctional dihydrofolate reductase-thymidylate synthase from Plasmodium chabaudi.